The sequence spans 157 residues: Transcription elongation factor GreA (157 aa).

The protein belongs to the GreA/GreB family.

In terms of biological role, necessary for efficient RNA polymerase transcription elongation past template-encoded arresting sites. The arresting sites in DNA have the property of trapping a certain fraction of elongating RNA polymerases that pass through, resulting in locked ternary complexes. Cleavage of the nascent transcript by cleavage factors such as GreA or GreB allows the resumption of elongation from the new 3'terminus. GreA releases sequences of 2 to 3 nucleotides. The polypeptide is Transcription elongation factor GreA (Brucella anthropi (strain ATCC 49188 / DSM 6882 / CCUG 24695 / JCM 21032 / LMG 3331 / NBRC 15819 / NCTC 12168 / Alc 37) (Ochrobactrum anthropi)).